The following is a 218-amino-acid chain: OPA3-like protein (218 aa).

Residues 129 to 179 adopt a coiled-coil conformation; the sequence is NEIMEKQFVLQKKKNELQSSTEEIDSTEKDFDELHKVILKVERELHTLRQN. Positions 175 to 218 are disordered; the sequence is TLRQNTPSQNEQAEATPSKEIPRETVSEKADHPPSSNTKSVSTG. Polar residues predominate over residues 176–189; sequence LRQNTPSQNEQAEA. The span at 194-206 shows a compositional bias: basic and acidic residues; the sequence is EIPRETVSEKADH. Over residues 208–218 the composition is skewed to polar residues; it reads PSSNTKSVSTG.

Belongs to the OPA3 family.

In Schizosaccharomyces pombe (strain 972 / ATCC 24843) (Fission yeast), this protein is OPA3-like protein.